A 507-amino-acid chain; its full sequence is Iroquois-class homeodomain protein IRX-3 (507 aa).

Positions arginine 19–glycine 39 are disordered. The span at alanine 22–glycine 39 shows a compositional bias: gly residues. A DNA-binding region (homeobox; TALE-type) is located at residues aspartate 130–asparagine 192. 2 disordered regions span residues lysine 193–alanine 398 and arginine 416–aspartate 468. Composition is skewed to acidic residues over residues arginine 213–glutamate 223 and glutamate 230–asparagine 261. 2 stretches are compositionally biased toward pro residues: residues alanine 314–alanine 342 and phenylalanine 418–histidine 428. Phosphoserine is present on residues serine 326 and serine 329. Residues alanine 436 to proline 460 are compositionally biased toward low complexity.

It belongs to the TALE/IRO homeobox family. In terms of tissue distribution, expressed by neural progenitor cells in discrete domains of the ventral neural tube. Also expressed in specific and overlapping patterns with Irx1 and Irx2 in the developing and adult metanephric kidney. In the adult metanephros, renal expression is confined to the S3 segment of the proximal tubule, in the loop of Henle.

Its subcellular location is the nucleus. In terms of biological role, transcription factor involved in SHH-dependent neural patterning. Together with NKX2-2 and NKX6-1 acts to restrict the generation of motor neurons to the appropriate region of the neural tube. Belongs to the class I proteins of neuronal progenitor factors, which are repressed by SHH signals. Involved in the transcriptional repression of MNX1 in non-motor neuron cells. Acts as a regulator of energy metabolism. This is Iroquois-class homeodomain protein IRX-3 (Irx3) from Mus musculus (Mouse).